We begin with the raw amino-acid sequence, 132 residues long: Small ribosomal subunit protein uS15 (132 aa).

It belongs to the universal ribosomal protein uS15 family. As to quaternary structure, part of the 30S ribosomal subunit.

The sequence is that of Small ribosomal subunit protein uS15 from Methanobrevibacter smithii (strain ATCC 35061 / DSM 861 / OCM 144 / PS).